Consider the following 355-residue polypeptide: UDP-3-O-acylglucosamine N-acyltransferase (355 aa).

His246 serves as the catalytic Proton acceptor.

The protein belongs to the transferase hexapeptide repeat family. LpxD subfamily. Homotrimer.

It carries out the reaction a UDP-3-O-[(3R)-3-hydroxyacyl]-alpha-D-glucosamine + a (3R)-hydroxyacyl-[ACP] = a UDP-2-N,3-O-bis[(3R)-3-hydroxyacyl]-alpha-D-glucosamine + holo-[ACP] + H(+). It functions in the pathway bacterial outer membrane biogenesis; LPS lipid A biosynthesis. Its function is as follows. Catalyzes the N-acylation of UDP-3-O-acylglucosamine using 3-hydroxyacyl-ACP as the acyl donor. Is involved in the biosynthesis of lipid A, a phosphorylated glycolipid that anchors the lipopolysaccharide to the outer membrane of the cell. This is UDP-3-O-acylglucosamine N-acyltransferase from Polaromonas naphthalenivorans (strain CJ2).